Reading from the N-terminus, the 564-residue chain is H/ACA ribonucleoprotein complex non-core subunit NAF1 (564 aa).

Disordered regions lie at residues 1–29 (MESEQPAAVKASAPIEEPQSTETAVELGK), 108–218 (LVVQ…DSEG), 238–264 (DEDDEDFDEDGATGDRSRRRQPPKVRG), 387–489 (ASWE…HPSY), and 538–564 (PHMYPPPPPFAPPPPNNQSHQGQPPPS). The span at 146–157 (ASGLSLLAAYSS) shows a compositional bias: low complexity. A compositionally biased stretch (acidic residues) spans 238–249 (DEDDEDFDEDGA). At T250 the chain carries Phosphothreonine. S254 carries the phosphoserine modification. The segment covering 388-402 (SWEHDVEPPARYVDH) has biased composition (basic and acidic residues). S403 carries the post-translational modification Phosphoserine. Positions 426–446 (STDSVDTVTSVATTATKASSV) are enriched in low complexity. T427 carries the phosphothreonine modification. Residue S429 is modified to Phosphoserine. Residue T432 is modified to Phosphothreonine. The segment covering 468–489 (PSINQHNQNQPQDEQYNFHPSY) has biased composition (polar residues). Pro residues predominate over residues 538 to 553 (PHMYPPPPPFAPPPPN). The segment covering 554 to 564 (NQSHQGQPPPS) has biased composition (polar residues).

Belongs to the NAF1 family. In terms of assembly, during assembly of the complex, component of the box H/ACA small nucleolar ribonucleoprotein (H/ACA snoRNP) complex.

The protein localises to the nucleus. In terms of biological role, RNA-binding protein required for the maturation of the box H/ACA small nucleolar ribonucleoprotein (H/ACA snoRNP) complex and ribosome biogenesis. During assembly of the H/ACA snoRNP complex it associates with the complex and dissociates during complex maturation, becoming replaced by Gar1 to yield mature H/ACA snoRNP complex. The chain is H/ACA ribonucleoprotein complex non-core subunit NAF1 from Drosophila melanogaster (Fruit fly).